A 514-amino-acid chain; its full sequence is WD repeat-containing protein 26 (514 aa).

The CTLH domain occupies 9–84 (EHPSATKFRN…EYLEDGKVLE (76 aa)). WD repeat units lie at residues 206 to 245 (EHCN…HLLK), 252 to 291 (GHAY…GELR), 297 to 337 (SHED…DSWE), 377 to 416 (QEDH…LVRK), 419 to 461 (GVTQ…PIAE), and 464 to 504 (GHTR…DHQN).

Forms homooligomers. Identified in the CTLH complex that contains GID4, RANBP9 and/or RANBP10, MKLN1, MAEA, RMND5A (or alternatively its paralog RMND5B), GID8, ARMC8, WDR26 and YPEL5. Within this complex, MAEA, RMND5A (or alternatively its paralog RMND5B), GID8, WDR26, and RANBP9 and/or RANBP10 form the catalytic core, while GID4, MKLN1, ARMC8 and YPEL5 have ancillary roles. Interacts with DDB1-CUL4A/B E3 ligase complexes. Forms a complex composed of at least WDR26, a G-beta:gamma unit, and PLCB2. Interacts with AXIN1.

It is found in the cytoplasm. The protein resides in the nucleus. Its subcellular location is the mitochondrion. Functionally, G-beta-like protein involved in cell signal transduction. Acts as a negative regulator in MAPK signaling pathway. Functions as a scaffolding protein to promote G beta:gamma-mediated PLCB2 plasma membrane translocation and subsequent activation in leukocytes. Core component of the CTLH E3 ubiquitin-protein ligase complex that selectively accepts ubiquitin from UBE2H and mediates ubiquitination and subsequent proteasomal degradation of the transcription factor HBP1. Acts as a negative regulator of the canonical Wnt signaling pathway through preventing ubiquitination of beta-catenin CTNNB1 by the beta-catenin destruction complex, thus negatively regulating CTNNB1 degradation. Protects cells from oxidative stress-induced apoptosis via the down-regulation of AP-1 transcriptional activity as well as by inhibiting cytochrome c release from mitochondria. Also protects cells by promoting hypoxia-mediated autophagy and mitophagy. The polypeptide is WD repeat-containing protein 26 (Wdr26) (Rattus norvegicus (Rat)).